Reading from the N-terminus, the 83-residue chain is Small integral membrane protein 10 (83 aa).

The chain crosses the membrane as a helical span at residues phenylalanine 64 to tyrosine 82.

The protein localises to the membrane. The protein is Small integral membrane protein 10 (SMIM10) of Homo sapiens (Human).